The primary structure comprises 739 residues: Phosphoribosylformylglycinamidine synthase subunit PurL (739 aa).

Residue His-49 is part of the active site. Positions 52 and 91 each coordinate ATP. Glu-93 contributes to the Mg(2+) binding site. Residues 94–97 (SHNH) and Arg-116 each bind substrate. The active-site Proton acceptor is His-95. Asp-117 lines the Mg(2+) pocket. Gln-240 serves as a coordination point for substrate. Asp-268 is a Mg(2+) binding site. Residue 312-314 (ESQ) coordinates substrate. 2 residues coordinate ATP: Asp-493 and Gly-530. A Mg(2+)-binding site is contributed by Asn-531. Ser-533 contacts substrate.

Belongs to the FGAMS family. In terms of assembly, monomer. Part of the FGAM synthase complex composed of 1 PurL, 1 PurQ and 2 PurS subunits.

The protein resides in the cytoplasm. It catalyses the reaction N(2)-formyl-N(1)-(5-phospho-beta-D-ribosyl)glycinamide + L-glutamine + ATP + H2O = 2-formamido-N(1)-(5-O-phospho-beta-D-ribosyl)acetamidine + L-glutamate + ADP + phosphate + H(+). Its pathway is purine metabolism; IMP biosynthesis via de novo pathway; 5-amino-1-(5-phospho-D-ribosyl)imidazole from N(2)-formyl-N(1)-(5-phospho-D-ribosyl)glycinamide: step 1/2. Functionally, part of the phosphoribosylformylglycinamidine synthase complex involved in the purines biosynthetic pathway. Catalyzes the ATP-dependent conversion of formylglycinamide ribonucleotide (FGAR) and glutamine to yield formylglycinamidine ribonucleotide (FGAM) and glutamate. The FGAM synthase complex is composed of three subunits. PurQ produces an ammonia molecule by converting glutamine to glutamate. PurL transfers the ammonia molecule to FGAR to form FGAM in an ATP-dependent manner. PurS interacts with PurQ and PurL and is thought to assist in the transfer of the ammonia molecule from PurQ to PurL. This chain is Phosphoribosylformylglycinamidine synthase subunit PurL, found in Parvibaculum lavamentivorans (strain DS-1 / DSM 13023 / NCIMB 13966).